A 529-amino-acid chain; its full sequence is Peptide chain release factor 3 (529 aa).

Residues 11-280 enclose the tr-type G domain; sequence SKRRTFAIIS…GLTEWAPAPK (270 aa). Residues 20–27, 88–92, and 142–145 contribute to the GTP site; these read SHPDAGKT, DTPGH, and NKLD.

The protein belongs to the TRAFAC class translation factor GTPase superfamily. Classic translation factor GTPase family. PrfC subfamily.

It is found in the cytoplasm. In terms of biological role, increases the formation of ribosomal termination complexes and stimulates activities of RF-1 and RF-2. It binds guanine nucleotides and has strong preference for UGA stop codons. It may interact directly with the ribosome. The stimulation of RF-1 and RF-2 is significantly reduced by GTP and GDP, but not by GMP. In Vibrio parahaemolyticus serotype O3:K6 (strain RIMD 2210633), this protein is Peptide chain release factor 3.